Reading from the N-terminus, the 583-residue chain is Protein cps3 (583 aa).

2 consecutive C3H1-type zinc fingers follow at residues 35 to 62 and 64 to 91; these read SLQH…HDLE and ATEK…HVLP. 3 disordered regions span residues 318 to 346, 471 to 490, and 504 to 532; these read LGRP…NGST, KVSS…YNGT, and RQES…KNLG. 3 stretches are compositionally biased toward polar residues: residues 323–334, 475–490, and 513–532; these read KSPSVPTSVGSN, NLNS…YNGT, and PSLN…KNLG.

The protein resides in the cytoplasm. Functionally, responsible for supersensitivity to the spindle poison, isopropyl N-3-chlorophenyl carbamate. Has a role in meiosis. The sequence is that of Protein cps3 (cps3) from Schizosaccharomyces pombe (strain 972 / ATCC 24843) (Fission yeast).